A 200-amino-acid chain; its full sequence is MDYYAKPVARLIEQLARLPGIGPKTAQRLAFYLLNAPLEVALNLARAVEEARQAVRYCSVCGNLTDTDPCFICGDDRRRRDLLCVVERPRDVVALEKARVFKGLYHVLHGSISPVEGIGPEQLRIRELLKRLEGGTVREVILATNPTVEGETTALYLAGLIKPLGVSVTRIAHGLPVGADLEYADEMTLSKALEGRREMK.

The C4-type zinc finger occupies 58–73; sequence CSVCGNLTDTDPCFIC. One can recognise a Toprim domain in the interval 81–176; it reads DLLCVVERPR…SVTRIAHGLP (96 aa).

The protein belongs to the RecR family.

May play a role in DNA repair. It seems to be involved in an RecBC-independent recombinational process of DNA repair. It may act with RecF and RecO. In Pelotomaculum thermopropionicum (strain DSM 13744 / JCM 10971 / SI), this protein is Recombination protein RecR.